The following is a 174-amino-acid chain: von Hippel-Lindau tumor suppressor homolog (174 aa).

It belongs to the VHL family. As to quaternary structure, interacts with hif-1 (hydroxylated on 'Pro-621'); the interaction induces hif-1 degradation. May be a component of the cullin E3 ubiquitin ligase complex.

It participates in protein modification; protein ubiquitination. Functionally, involved in the response to variation in environmental oxygen levels by targeting the hypoxia-inducible transcription factor hif-1 for proteasomal degradation when oxygen levels are normal (around 20%). By regulating hif-1 expression, plays a role in iron homeostasis, aging, heat acclimation and progeny size. Mediates resistance to enteropathogenic E.coli. Mediates susceptibility to B.thuringiensis pore-forming toxins. Not involved in P.aeruginosa susceptibility. The protein is von Hippel-Lindau tumor suppressor homolog of Caenorhabditis elegans.